The chain runs to 306 residues: MSWIERILNKSTITSARRANIPEGVWTKCDSCGQVLYRAELERNLEVCPKCDHHMRMTARARLHAFLDKGSESELGSELEPKDILKFRDSKKYKDRLAAAQKATDEKDALVVMKGELYGMPVVVASFEFAFIGGSMSSVVGARFVRAVEQALADDCPLVCFSASGGARMQEALMSLMQMAKTSAALARLRERRLPYISVLTDPTMGGVSASLAMLGDLNVAEPKALIGFAGPRVIEQTVREKLPAGFQRSEFLLEKGAIDLIVRRPEMRLRLASLLAKLTNRPQPQDPLPHEPRPDAVPEDHQDEV.

One can recognise a CoA carboxyltransferase N-terminal domain in the interval valine 25–arginine 294. Zn(2+) contacts are provided by cysteine 29, cysteine 32, cysteine 48, and cysteine 51. The C4-type zinc finger occupies cysteine 29 to cysteine 51. The interval asparagine 281 to valine 306 is disordered. Positions leucine 289–valine 306 are enriched in basic and acidic residues.

It belongs to the AccD/PCCB family. As to quaternary structure, acetyl-CoA carboxylase is a heterohexamer composed of biotin carboxyl carrier protein (AccB), biotin carboxylase (AccC) and two subunits each of ACCase subunit alpha (AccA) and ACCase subunit beta (AccD). It depends on Zn(2+) as a cofactor.

The protein resides in the cytoplasm. The enzyme catalyses N(6)-carboxybiotinyl-L-lysyl-[protein] + acetyl-CoA = N(6)-biotinyl-L-lysyl-[protein] + malonyl-CoA. Its pathway is lipid metabolism; malonyl-CoA biosynthesis; malonyl-CoA from acetyl-CoA: step 1/1. Component of the acetyl coenzyme A carboxylase (ACC) complex. Biotin carboxylase (BC) catalyzes the carboxylation of biotin on its carrier protein (BCCP) and then the CO(2) group is transferred by the transcarboxylase to acetyl-CoA to form malonyl-CoA. The protein is Acetyl-coenzyme A carboxylase carboxyl transferase subunit beta of Sodalis glossinidius (strain morsitans).